A 324-amino-acid chain; its full sequence is uncharacterized protein (324 aa).

A run of 8 helical transmembrane segments spans residues 4–24 (GNKV…PEFM), 63–83 (AALL…EGIL), 106–128 (ALFY…ISFL), 132–151 (WQVQ…SHLL), 179–199 (LADI…AVTL), 209–229 (GLDG…LVIM), 246–266 (LETA…LYTL), and 282–302 (GTWK…GWFM).

It belongs to the TerC family.

The protein resides in the cell membrane. This is an uncharacterized protein from Bacillus subtilis (strain 168).